The primary structure comprises 294 residues: UDP-3-O-acyl-N-acetylglucosamine deacetylase (294 aa).

Positions 75, 232, and 236 each coordinate Zn(2+). The active-site Proton donor is histidine 259.

This sequence belongs to the LpxC family. Zn(2+) is required as a cofactor.

It catalyses the reaction a UDP-3-O-[(3R)-3-hydroxyacyl]-N-acetyl-alpha-D-glucosamine + H2O = a UDP-3-O-[(3R)-3-hydroxyacyl]-alpha-D-glucosamine + acetate. The protein operates within glycolipid biosynthesis; lipid IV(A) biosynthesis; lipid IV(A) from (3R)-3-hydroxytetradecanoyl-[acyl-carrier-protein] and UDP-N-acetyl-alpha-D-glucosamine: step 2/6. Its function is as follows. Catalyzes the hydrolysis of UDP-3-O-myristoyl-N-acetylglucosamine to form UDP-3-O-myristoylglucosamine and acetate, the committed step in lipid A biosynthesis. This chain is UDP-3-O-acyl-N-acetylglucosamine deacetylase, found in Sulfurimonas denitrificans (strain ATCC 33889 / DSM 1251) (Thiomicrospira denitrificans (strain ATCC 33889 / DSM 1251)).